A 548-amino-acid chain; its full sequence is Glucose-6-phosphate isomerase (548 aa).

Residue Glu354 is the Proton donor of the active site. Residues His385 and Lys513 contribute to the active site.

The protein belongs to the GPI family.

The protein localises to the cytoplasm. The enzyme catalyses alpha-D-glucose 6-phosphate = beta-D-fructose 6-phosphate. The protein operates within carbohydrate biosynthesis; gluconeogenesis. Its pathway is carbohydrate degradation; glycolysis; D-glyceraldehyde 3-phosphate and glycerone phosphate from D-glucose: step 2/4. Catalyzes the reversible isomerization of glucose-6-phosphate to fructose-6-phosphate. The chain is Glucose-6-phosphate isomerase from Marinomonas sp. (strain MWYL1).